Consider the following 349-residue polypeptide: Twinfilin-2 (349 aa).

The residue at position 2 (Ala-2) is an N-acetylalanine. ADF-H domains lie at 4-139 and 177-313; these read QTGI…KHLS and GLAF…DEVH. Lys-14 bears the N6-acetyllysine mark. A Phosphotyrosine modification is found at Tyr-309. The disordered stretch occupies residues 322 to 349; sequence AFAKPKGPGGKRGHKRLIRGPGENGEDS. Basic residues predominate over residues 330-339; it reads GGKRGHKRLI. The residue at position 349 (Ser-349) is a Phosphoserine.

Belongs to the actin-binding proteins ADF family. Twinfilin subfamily. As to quaternary structure, interacts with G-actin; ADP-actin form and capping protein (CP). Isoform 2 interacts (via its N-terminal ADF-H domain) with G-actin (ADP-bound form) with significantly higher affinity than isoform 1. May also be able to interact with TWF1 and phosphoinositides, PI(4,5)P2. When bound to PI(4,5)P2, it is down-regulated. Interacts with MYO7A. Post-translationally, phosphorylated on both serine/threonine and tyrosine. As to expression, isoform 1 is ubiquitously expressed (at protein level). Isoform 2 expression is restricted to heart and skeletal muscle where it is the predominant form.

The protein resides in the cytoplasm. Its subcellular location is the cytoskeleton. It localises to the perinuclear region. It is found in the cell projection. The protein localises to the stereocilium. Actin-binding protein involved in motile and morphological processes. Inhibits actin polymerization, likely by sequestering G-actin. By capping the barbed ends of filaments, it also regulates motility. Seems to play an important role in clathrin-mediated endocytosis and distribution of endocytic organelles. May play a role in regulating the mature length of the middle and short rows of stereocilia. The polypeptide is Twinfilin-2 (Twf2) (Mus musculus (Mouse)).